Consider the following 362-residue polypeptide: DLA class I histocompatibility antigen, A9/A9 alpha chain (362 aa).

The N-terminal stretch at 1–24 is a signal peptide; the sequence is MEVVMPRALLVLLSAALALTPTRA. Positions 25-114 are alpha-1; sequence GSHSLRYFYT…LRGYYNQSEA (90 aa). At 25-306 the chain is on the extracellular side; sequence GSHSLRYFYT…RRWEPSPLST (282 aa). A glycan (N-linked (GlcNAc...) asparagine) is linked at Asn110. The alpha-2 stretch occupies residues 115-207; the sequence is GSHTRQTMYG…EMGKETLLRA (93 aa). 2 disulfides stabilise this stretch: Cys125–Cys189 and Cys228–Cys284. Positions 208 to 299 are alpha-3; sequence DPPSTRVTHH…GLPEPITRRW (92 aa). One can recognise an Ig-like C1-type domain in the interval 210 to 296; that stretch reads PSTRVTHHPV…QHEGLPEPIT (87 aa). A connecting peptide region spans residues 300–306; that stretch reads EPSPLST. A helical transmembrane segment spans residues 307–329; the sequence is IVIVSIAALVLLVVAGVIGAVIW. At 330–362 the chain is on the cytoplasmic side; sequence RKQRSGGKGPGYSHAARDDSAQGSDVSLTAPRV. The disordered stretch occupies residues 333 to 362; it reads RSGGKGPGYSHAARDDSAQGSDVSLTAPRV.

The protein belongs to the MHC class I family. As to quaternary structure, heterodimer of an alpha chain and a beta chain (beta-2-microglobulin).

Its subcellular location is the membrane. Involved in the presentation of foreign antigens to the immune system. The protein is DLA class I histocompatibility antigen, A9/A9 alpha chain of Canis lupus familiaris (Dog).